We begin with the raw amino-acid sequence, 95 residues long: Cell division topological specificity factor (95 aa).

Belongs to the MinE family.

Prevents the cell division inhibition by proteins MinC and MinD at internal division sites while permitting inhibition at polar sites. This ensures cell division at the proper site by restricting the formation of a division septum at the midpoint of the long axis of the cell. The sequence is that of Cell division topological specificity factor from Trichodesmium erythraeum (strain IMS101).